A 224-amino-acid polypeptide reads, in one-letter code: Deoxyribose-phosphate aldolase (224 aa).

Aspartate 92 serves as the catalytic Proton donor/acceptor. Residue lysine 154 is the Schiff-base intermediate with acetaldehyde of the active site. Lysine 183 (proton donor/acceptor) is an active-site residue.

Belongs to the DeoC/FbaB aldolase family. DeoC type 1 subfamily.

It is found in the cytoplasm. The enzyme catalyses 2-deoxy-D-ribose 5-phosphate = D-glyceraldehyde 3-phosphate + acetaldehyde. It participates in carbohydrate degradation; 2-deoxy-D-ribose 1-phosphate degradation; D-glyceraldehyde 3-phosphate and acetaldehyde from 2-deoxy-alpha-D-ribose 1-phosphate: step 2/2. Catalyzes a reversible aldol reaction between acetaldehyde and D-glyceraldehyde 3-phosphate to generate 2-deoxy-D-ribose 5-phosphate. This chain is Deoxyribose-phosphate aldolase, found in Mannheimia succiniciproducens (strain KCTC 0769BP / MBEL55E).